Reading from the N-terminus, the 759-residue chain is MKIAIVLLAIIALVAASSISKHEVKIADKEFLAKQKFLFEIVYRVEDPLMFEEWIKMGKTFTFDKSGYTHFDMYMEKFYEAYKYGAILPKGEFFYYAKNWETFQRNVAFARMHFNEGMFVYALTLAVIHRDDFQGLILPSIHEIFPQYFFNSKFVYEAEKFDYDVWSKYIMYEKEYKDILYKDYSTFYKNHDNHHYYYFTKDFKTYQWWKMMGLGEHWYSEDRFMLRDNMNKYNKDSKYLEIFEGTKMFFMPVDYTRDIEFFNKESVLSYFTEDVGLNTYWYYLNMDYAFILDGKTFGLNKDRRGEYWLYNVRQLLSRYYMERLTHGYGEIPHFSFLNTIEHGYDSQLVYNNGVGFSYRKNYYEVESYGKFSYYYKVMDFFNRLDEIITKGVYVTYEGKTIDLRKPESIEYIGSIMQGNVDTFDNYFFKYRYMFAHMYFGDVNTHDFEVFPHIFLNYETMMRDPMFYMFYKKIASVYFQFFNYVKPYTHEELLFPGVTIKDVKVSELVTYFDLVDFDVTNLMNDEMTFVDGQFVWDKTLLARQMRLNHKPFDFDFVIESDKSHKVVIRTFLGPKYDEFGRVITLTENRQNFMEIDSFIYTLKSGVNDFKRLSKDFYWTVEDRTTYNELYKYVMLALQGKYDFPLDISEPHCGFPDRLVLPHGWYKGMPMQFFFYIAPYTASYGPFSTYDSTYACGIGSGVRHIDEMPFGYPFDREIDEYEFFVPNMYFKDVKIYHQDTFDKYYGKKYENFGHFDYSYYH.

The signal sequence occupies residues 1 to 16; that stretch reads MKIAIVLLAIIALVAA.

It belongs to the hemocyanin family. As to quaternary structure, heterohexamer. Fat body.

The protein localises to the secreted. Its subcellular location is the extracellular space. In terms of biological role, arylphorin is a larval storage protein (LSP) which may serve as a storage protein used primarily as a source of aromatic amino acids for protein synthesis during metamorphosis. It is a constituent of the sclerotizing system of the cuticle, and serves as a carrier for ecdysteroid hormone. The protein is Arylphorin subunit A4 of Calliphora vicina (Blue blowfly).